Reading from the N-terminus, the 345-residue chain is NADH-ubiquinone oxidoreductase chain 2 (345 aa).

Transmembrane regions (helical) follow at residues 1–21, 25–45, 59–79, 96–116, 123–143, 148–168, 191–211, 240–260, 274–294, and 324–344; these read MNPI…ILTM, HWVS…PIIS, YFLI…TNAY, IMLS…FWLP, PMIT…ALLI, LIPP…GGLG, ITIT…YILL, TASL…LSGF, HLTP…MFYL, and SLLS…PLMI.

The protein belongs to the complex I subunit 2 family.

It is found in the mitochondrion inner membrane. It carries out the reaction a ubiquinone + NADH + 5 H(+)(in) = a ubiquinol + NAD(+) + 4 H(+)(out). Core subunit of the mitochondrial membrane respiratory chain NADH dehydrogenase (Complex I) that is believed to belong to the minimal assembly required for catalysis. Complex I functions in the transfer of electrons from NADH to the respiratory chain. The immediate electron acceptor for the enzyme is believed to be ubiquinone. This chain is NADH-ubiquinone oxidoreductase chain 2 (MT-ND2), found in Varanus timorensis (Timor monitor).